Here is a 919-residue protein sequence, read N- to C-terminus: Motility hub protein FimV (919 aa).

An N-terminal signal peptide occupies residues 1-24; it reads MVRLRTLVRAIAAASVLTSGMAHG. Low complexity predominate over residues 140-171; it reads ASAPQAPVSAPRATGAPRAPQAPAPVRTTAPA. Disordered regions lie at residues 140-177 and 237-312; these read ASAPQAPVSAPRATGAPRAPQAPAPVRTTAPAGSDTYR and ERSP…KGDS. The region spanning 174-229 is the LysM domain; it reads DTYRTVSNDTLWEIAQRNRTDRVSVPQAMLAFQELNPGAFVDGNINRLKSGQVLRI. Polar residues predominate over residues 245-256; the sequence is SQVQAQNQSWRG. A compositionally biased stretch (basic and acidic residues) spans 299 to 312; that stretch reads KASKGADKGGKGDS. Residues 319-367 adopt a coiled-coil conformation; sequence LAVTKESLDSTRRENEELQSRMQDLQSQLDKLQKLIQLKDAQLAKLQGQ. Residues 372–445 are disordered; the sequence is GQGAAQPNAA…APAVPAPAPV (74 aa). Positions 390-417 are enriched in low complexity; sequence AAAQAPAQPGTPAAAAPTPAPAGEAPAA. Residues 418–443 are compositionally biased toward pro residues; that stretch reads PAQPPVAPPPAPAAEKPPAPAVPAPA. The helical transmembrane segment at 464 to 484 threads the bilayer; sequence LWLAVIGGSALLALLVLLMIL. Positions 785 to 816 are disordered; it reads AEEPALSLPDDFDLSLADEPTEPAAPEKGEDS.

Interacts with FimL. Interacts with DgcP.

It is found in the cell inner membrane. Inner membrane hub protein that plays both cAMP-dependent and cAMP-independent roles in twitching motility. Regulates intracellular cyclic AMP (cAMP) levels through the activation of adenylate cyclase CyaB. Plays an essential role in a number of virulence mechanisms including type IV pilus (T4P)-mediated assembly and twitching motility as well as cAMP-dependent virulence gene expression. Also mediates type II secretion (T2S) of lipases and proteases. In addition, mediates the cAMP-independent localization of multiple T4P structural and regulatory components to the cell poles. This role in directing proteins to the cell pole is not restricted to type IV component and involves other proteins such as the diguanylate cyclase DgcP. This is Motility hub protein FimV (fimV) from Pseudomonas aeruginosa (strain ATCC 15692 / DSM 22644 / CIP 104116 / JCM 14847 / LMG 12228 / 1C / PRS 101 / PAO1).